Consider the following 481-residue polypeptide: 3-isopropylmalate dehydratase large subunit (481 aa).

Cys355, Cys415, and Cys418 together coordinate [4Fe-4S] cluster.

Belongs to the aconitase/IPM isomerase family. LeuC type 1 subfamily. Heterodimer of LeuC and LeuD. Requires [4Fe-4S] cluster as cofactor.

The enzyme catalyses (2R,3S)-3-isopropylmalate = (2S)-2-isopropylmalate. It functions in the pathway amino-acid biosynthesis; L-leucine biosynthesis; L-leucine from 3-methyl-2-oxobutanoate: step 2/4. Catalyzes the isomerization between 2-isopropylmalate and 3-isopropylmalate, via the formation of 2-isopropylmaleate. In Symbiobacterium thermophilum (strain DSM 24528 / JCM 14929 / IAM 14863 / T), this protein is 3-isopropylmalate dehydratase large subunit.